A 482-amino-acid chain; its full sequence is O-phosphoseryl-tRNA(Sec) selenium transferase (482 aa).

The interval 1-36 (MKSSFGKKEGEYSRLVSKSSNKLLNSLWEKKQIPEE) is tetramerization. R69 serves as a coordination point for pyridoxal 5'-phosphate. The segment at 90-100 (GRSGNLLEIQP) is phosphate loop (P-loop). Substrate is bound by residues R91, S92, and Q99. At K277 the chain carries N6-(pyridoxal phosphate)lysine. R306 lines the substrate pocket. R388 contributes to the tRNA binding site. The disordered stretch occupies residues 461 to 482 (DRRGGSSGRRVPMNESFDMEND).

It belongs to the SepSecS family. As to quaternary structure, homotetramer formed by a catalytic dimer and a non-catalytic dimer serving as a binding platform that orients tRNASec for catalysis. Each tetramer binds the CCA ends of two tRNAs which point to the active sites of the catalytic dimer. Pyridoxal 5'-phosphate serves as cofactor.

The protein localises to the cytoplasm. It catalyses the reaction O-phospho-L-seryl-tRNA(Sec) + selenophosphate + H2O = L-selenocysteinyl-tRNA(Sec) + 2 phosphate. The protein operates within aminoacyl-tRNA biosynthesis; selenocysteinyl-tRNA(Sec) biosynthesis; selenocysteinyl-tRNA(Sec) from L-seryl-tRNA(Sec) (archaeal/eukaryal route): step 2/2. Converts O-phosphoseryl-tRNA(Sec) to selenocysteinyl-tRNA(Sec) required for selenoprotein biosynthesis. The polypeptide is O-phosphoseryl-tRNA(Sec) selenium transferase (secs-1) (Caenorhabditis briggsae).